Consider the following 480-residue polypeptide: Thyroid receptor-interacting protein 6 (480 aa).

Positions 1–12 (MSGPTWLPPKQP) are enriched in pro residues. Positions 1-43 (MSGPTWLPPKQPEPSRLPQGRSLPRGALGPPTAHGATLQPHPR) are disordered. Arg25 carries the post-translational modification Asymmetric dimethylarginine; alternate. Arg25 carries the post-translational modification Omega-N-methylarginine; alternate. Tyr55 carries the post-translational modification Phosphotyrosine; by SRC. The interval 57–84 (PPGVPEDRGPTWVGSHGTPQRLQGLPPD) is disordered. Position 92 is a phosphoserine (Ser92). Positions 107–134 (LDGGRSHAPRRPDRQAFEAPPPHAYRGG) are disordered. Over residues 108-122 (DGGRSHAPRRPDRQA) the composition is skewed to basic and acidic residues. 3 positions are modified to omega-N-methylarginine: Arg111, Arg183, and Arg190. Residue Ser193 is modified to Phosphoserine. 2 positions are modified to omega-N-methylarginine: Arg209 and Arg242. The disordered stretch occupies residues 218-257 (RSHREPGPGVPEGPSGVHIPAGGGRGGGHEPQGPLGQPPE). The span at 238-247 (AGGGRGGGHE) shows a compositional bias: gly residues. 3 consecutive LIM zinc-binding domains span residues 281–339 (GRCG…YVAT), 341–401 (EKCS…KFAP), and 404–471 (SVCG…RIQE). The tract at residues 473–480 (SATVTTDC) is interaction with MAGI1 and PTPN13.

The protein belongs to the zyxin/ajuba family. In terms of assembly, specifically interacts with the ligand binding domain of the thyroid receptor (TR) in the presence of thyroid hormone. Interacts (via the third LIM domain and C-terminus) with PTPN13 (via the second PDZ domain). Interacts (via the second LIM domain or via the third LIM domain plus C-terminus) with PDLIM4 (via PDZ domain). Found in a complex with PTPN13 and PDLIM4. Interacts with SVIL isoform 2. Interacts with LPAR2 but not other LPA receptors. Interacts with PRKAA2. Interacts with MAGI1. Interacts with SCRIB. In case of infection, interacts with S.typhimurium protein sseI. Phosphorylation at Tyr-55 by SRC is required for enhancement of lysophosphatidic acid-induced cell migration. Tyr-55 is dephosphorylated by PTPN13. Highly expressed in kidney, stomach, lung, heart and testis. Low expression levels in brain, colon, thymus, pancreas and skin. Not expressed in skeletal muscle.

The protein localises to the cytoplasm. The protein resides in the cytoskeleton. It is found in the cell junction. Its subcellular location is the focal adhesion. It localises to the nucleus. Its function is as follows. Relays signals from the cell surface to the nucleus to weaken adherens junction and promote actin cytoskeleton reorganization and cell invasiveness. Involved in lysophosphatidic acid-induced cell adhesion and migration. Acts as a transcriptional coactivator for NF-kappa-B and JUN, and mediates the transrepression of these transcription factors induced by glucocorticoid receptor. This Mus musculus (Mouse) protein is Thyroid receptor-interacting protein 6 (Trip6).